Reading from the N-terminus, the 637-residue chain is tRNA uridine 5-carboxymethylaminomethyl modification enzyme MnmG (637 aa).

FAD is bound at residue 14–19 (GAGHAG). Residue 279 to 293 (GPRYCPSIEDKVVRF) participates in NAD(+) binding.

It belongs to the MnmG family. As to quaternary structure, homodimer. Heterotetramer of two MnmE and two MnmG subunits. FAD is required as a cofactor.

The protein resides in the cytoplasm. Functionally, NAD-binding protein involved in the addition of a carboxymethylaminomethyl (cmnm) group at the wobble position (U34) of certain tRNAs, forming tRNA-cmnm(5)s(2)U34. This chain is tRNA uridine 5-carboxymethylaminomethyl modification enzyme MnmG, found in Desulfitobacterium hafniense (strain Y51).